We begin with the raw amino-acid sequence, 304 residues long: GS homeobox 2 (304 aa).

The segment at 116–151 (AQFCPRVNHAHHHHHPPQHHHHHHQPQQPGSAAAAA) is disordered. The segment covering 123 to 140 (NHAHHHHHPPQHHHHHHQ) has biased composition (basic residues). A compositionally biased stretch (low complexity) spans 141–151 (PQQPGSAAAAA). A DNA-binding region (homeobox) is located at residues 202–261 (GKRMRTAFTSTQLLELEREFSSNMYLSRLRRIEIATYLNLSEKQVKIWFQNRRVKHKKEG). The interval 283–304 (RSEDEDSLSPASANDDKEISPL) is disordered.

The protein belongs to the Antp homeobox family.

Its subcellular location is the nucleus. It localises to the cytoplasm. Transcription factor that binds 5'-CNAATTAG-3' DNA sequence and regulates the expression of numerous genes including genes important for brain development. During telencephalic development, causes ventralization of pallial progenitors and, depending on the developmental stage, specifies different neuronal fates. At early stages, necessary and sufficient to correctly specify the ventral lateral ganglionic eminence (LGE) and its major derivatives, the striatal projection neurons. At later stages, may specify LGE progenitors toward dorsal LGE fates, including olfactory bulb interneurons. This is GS homeobox 2 (GSX2) from Homo sapiens (Human).